The sequence spans 156 residues: uncharacterized protein (156 aa).

This is an uncharacterized protein from Staphylococcus aureus (strain MW2).